The sequence spans 286 residues: Thymidylate synthase (286 aa).

Position 21 (Arg-21) interacts with dUMP. Asn-51 lines the (6R)-5,10-methylene-5,6,7,8-tetrahydrofolate pocket. Arg-150–Arg-151 is a binding site for dUMP. Cys-170 functions as the Nucleophile in the catalytic mechanism. Residues Arg-190–Asp-193, Asn-201, and His-231–Tyr-233 contribute to the dUMP site. Asp-193 lines the (6R)-5,10-methylene-5,6,7,8-tetrahydrofolate pocket. (6R)-5,10-methylene-5,6,7,8-tetrahydrofolate is bound at residue Ala-285.

This sequence belongs to the thymidylate synthase family. Bacterial-type ThyA subfamily. Homodimer.

The protein resides in the cytoplasm. The catalysed reaction is dUMP + (6R)-5,10-methylene-5,6,7,8-tetrahydrofolate = 7,8-dihydrofolate + dTMP. Its pathway is pyrimidine metabolism; dTTP biosynthesis. Catalyzes the reductive methylation of 2'-deoxyuridine-5'-monophosphate (dUMP) to 2'-deoxythymidine-5'-monophosphate (dTMP) while utilizing 5,10-methylenetetrahydrofolate (mTHF) as the methyl donor and reductant in the reaction, yielding dihydrofolate (DHF) as a by-product. This enzymatic reaction provides an intracellular de novo source of dTMP, an essential precursor for DNA biosynthesis. The chain is Thymidylate synthase from Mycoplasmopsis pulmonis (strain UAB CTIP) (Mycoplasma pulmonis).